A 143-amino-acid polypeptide reads, in one-letter code: MAKKIVGFIKLQIPAGKANPSPPVGPALGQRGLNIMEFCKAFNAQTQGMEPGLPVPVVITAFADKSFTFVMKTPPATVLIKKAAKVDKGSSKPHTDKVGSITRAQAEEIAKTKMPDLTAADLDAAVRTIAGSARSMGITVEGV.

The protein belongs to the universal ribosomal protein uL11 family. In terms of assembly, part of the ribosomal stalk of the 50S ribosomal subunit. Interacts with L10 and the large rRNA to form the base of the stalk. L10 forms an elongated spine to which L12 dimers bind in a sequential fashion forming a multimeric L10(L12)X complex. In terms of processing, one or more lysine residues are methylated.

Functionally, forms part of the ribosomal stalk which helps the ribosome interact with GTP-bound translation factors. In Burkholderia ambifaria (strain MC40-6), this protein is Large ribosomal subunit protein uL11.